The primary structure comprises 269 residues: Energy-coupling factor transporter ATP-binding protein EcfA1 (269 aa).

The region spanning 8 to 242 is the ABC transporter domain; that stretch reads ITFNHVRFKY…GDGLTEIGLD (235 aa). 42 to 49 serves as a coordination point for ATP; sequence GHNGSGKS.

It belongs to the ABC transporter superfamily. Energy-coupling factor EcfA family. As to quaternary structure, forms a stable energy-coupling factor (ECF) transporter complex composed of 2 membrane-embedded substrate-binding proteins (S component), 2 ATP-binding proteins (A component) and 2 transmembrane proteins (T component).

The protein localises to the cell membrane. Its function is as follows. ATP-binding (A) component of a common energy-coupling factor (ECF) ABC-transporter complex. Unlike classic ABC transporters this ECF transporter provides the energy necessary to transport a number of different substrates. This is Energy-coupling factor transporter ATP-binding protein EcfA1 from Staphylococcus saprophyticus subsp. saprophyticus (strain ATCC 15305 / DSM 20229 / NCIMB 8711 / NCTC 7292 / S-41).